The primary structure comprises 60 residues: Potassium channel toxin-like Tx677 (60 aa).

The N-terminal stretch at 1-22 (MKISALVMITLLICSMMILCQG) is a signal peptide. 3 disulfide bridges follow: cysteine 30–cysteine 51, cysteine 36–cysteine 56, and cysteine 40–cysteine 58.

Belongs to the short scorpion toxin superfamily. Potassium channel inhibitor family. As to expression, expressed by the venom gland.

The protein localises to the secreted. In terms of biological role, weakly inhibits Kv11.1/KCNH2/ERG1, Kv1.2/KCNA2 and Kv1.3/KCNA3 voltage-gated potassium channels. This Buthus israelis (Israeli scorpion) protein is Potassium channel toxin-like Tx677.